A 551-amino-acid polypeptide reads, in one-letter code: Rhodopsin kinase grk7-a (551 aa).

A Phosphoserine modification is found at Ser36. The region spanning 57–174 is the RGS domain; sequence YQSICVEQPI…QNSPFYDRFL (118 aa). Residues 189–451 form the Protein kinase domain; the sequence is FYEFRILGKG…DDDPRKHAFF (263 aa). ATP is bound by residues 195 to 203 and Lys218; that span reads LGKGGFGEV. Asp314 functions as the Proton acceptor in the catalytic mechanism. The AGC-kinase C-terminal domain occupies 452-517; that stretch reads KSINFQRLEA…GAIPISWQKE (66 aa). Ser487 carries the post-translational modification Phosphoserine. The tract at residues 529 to 551 is disordered; that stretch reads DPSREATGGGGNSGEKSGVCSIL. The segment covering 542–551 has biased composition (low complexity); that stretch reads GEKSGVCSIL. Cys548 is modified (cysteine methyl ester). Cys548 carries the S-geranylgeranyl cysteine lipid modification. The propeptide at 549–551 is removed in mature form; it reads SIL.

The protein belongs to the protein kinase superfamily. AGC Ser/Thr protein kinase family. GPRK subfamily. In terms of processing, autophosphorylated in vitro at Ser-487. Phosphorylation at Ser-36 is regulated by light and activated by cAMP.

It localises to the membrane. It catalyses the reaction L-threonyl-[rhodopsin] + ATP = O-phospho-L-threonyl-[rhodopsin] + ADP + H(+). It carries out the reaction L-seryl-[rhodopsin] + ATP = O-phospho-L-seryl-[rhodopsin] + ADP + H(+). Functionally, retina-specific kinase involved in the shutoff of the photoresponse and adaptation to changing light conditions via cone opsin phosphorylation, including rhodopsin (RHO). This chain is Rhodopsin kinase grk7-a (grk7-a), found in Xenopus laevis (African clawed frog).